Reading from the N-terminus, the 346-residue chain is Phosphoribosylformylglycinamidine cyclo-ligase (346 aa).

This sequence belongs to the AIR synthase family.

It is found in the cytoplasm. It carries out the reaction 2-formamido-N(1)-(5-O-phospho-beta-D-ribosyl)acetamidine + ATP = 5-amino-1-(5-phospho-beta-D-ribosyl)imidazole + ADP + phosphate + H(+). It participates in purine metabolism; IMP biosynthesis via de novo pathway; 5-amino-1-(5-phospho-D-ribosyl)imidazole from N(2)-formyl-N(1)-(5-phospho-D-ribosyl)glycinamide: step 2/2. The chain is Phosphoribosylformylglycinamidine cyclo-ligase from Geobacillus sp. (strain WCH70).